A 132-amino-acid polypeptide reads, in one-letter code: Small ribosomal subunit protein uS8 (132 aa).

This sequence belongs to the universal ribosomal protein uS8 family. As to quaternary structure, part of the 30S ribosomal subunit. Contacts proteins S5 and S12.

Functionally, one of the primary rRNA binding proteins, it binds directly to 16S rRNA central domain where it helps coordinate assembly of the platform of the 30S subunit. The chain is Small ribosomal subunit protein uS8 from Brucella anthropi (strain ATCC 49188 / DSM 6882 / CCUG 24695 / JCM 21032 / LMG 3331 / NBRC 15819 / NCTC 12168 / Alc 37) (Ochrobactrum anthropi).